Reading from the N-terminus, the 114-residue chain is FK506-binding protein 1 (114 aa).

An N-acetylserine modification is found at Ser2. Residues 26–114 (GDLVTIHYTG…VFDVELLKVN (89 aa)) form the PPIase FKBP-type domain. Ser51 bears the Phosphoserine mark.

The protein belongs to the FKBP-type PPIase family. FKBP1 subfamily. Interacts with HOM3; the interaction is direct, plays a role in feedback inhibition of aspartokinase by threonine, and is inhibited by tacrolimus and sirolimus. Interacts with HMO1. Interacts with FAP1.

The protein localises to the cytoplasm. It is found in the mitochondrion. The catalysed reaction is [protein]-peptidylproline (omega=180) = [protein]-peptidylproline (omega=0). PPIases accelerate the folding of proteins. It catalyzes the cis-trans isomerization of proline imidic peptide bonds in oligopeptides. Plays a role in feedback inhibition of the pathway synthesizing the aspartate family of amino acids by binding to aspartokinase. In Saccharomyces cerevisiae (strain ATCC 204508 / S288c) (Baker's yeast), this protein is FK506-binding protein 1 (FPR1).